Reading from the N-terminus, the 97-residue chain is Co-chaperonin GroES (97 aa).

It belongs to the GroES chaperonin family. In terms of assembly, heptamer of 7 subunits arranged in a ring. Interacts with the chaperonin GroEL.

It localises to the cytoplasm. Together with the chaperonin GroEL, plays an essential role in assisting protein folding. The GroEL-GroES system forms a nano-cage that allows encapsulation of the non-native substrate proteins and provides a physical environment optimized to promote and accelerate protein folding. GroES binds to the apical surface of the GroEL ring, thereby capping the opening of the GroEL channel. The protein is Co-chaperonin GroES of Azotobacter vinelandii (strain DJ / ATCC BAA-1303).